The following is a 224-amino-acid chain: UPF0758 protein Psyr_0222 (224 aa).

The MPN domain maps to 102 to 224 (ALENPTQVRS…PLSMVERGLM (123 aa)). Zn(2+) is bound by residues His173, His175, and Asp186. A JAMM motif motif is present at residues 173–186 (HNHPSGITTPSRSD).

This sequence belongs to the UPF0758 family.

The chain is UPF0758 protein Psyr_0222 from Pseudomonas syringae pv. syringae (strain B728a).